We begin with the raw amino-acid sequence, 376 residues long: UDP-N-acetylglucosamine 2-epimerase (376 aa).

Substrate-binding positions include Arg10, Lys15, Asp95, Glu117, His213, Gln271, Phe276, 290–292 (SGG), Glu296, and Arg313.

It belongs to the UDP-N-acetylglucosamine 2-epimerase family. Homodimer.

It is found in the cytoplasm. The enzyme catalyses UDP-N-acetyl-alpha-D-glucosamine = UDP-N-acetyl-alpha-D-mannosamine. It functions in the pathway bacterial outer membrane biogenesis; enterobacterial common antigen biosynthesis. In terms of biological role, catalyzes the reversible epimerization at C-2 of UDP-N-acetylglucosamine (UDP-GlcNAc) and thereby provides bacteria with UDP-N-acetylmannosamine (UDP-ManNAc), the activated donor of ManNAc residues. This chain is UDP-N-acetylglucosamine 2-epimerase, found in Salmonella typhimurium (strain LT2 / SGSC1412 / ATCC 700720).